A 76-amino-acid chain; its full sequence is Omega-agatoxin-Aa3b (76 aa).

Cystine bridges form between Cys-2-Cys-19, Cys-9-Cys-25, Cys-16-Cys-52, Cys-18-Cys-40, Cys-27-Cys-38, and Cys-59-Cys-67.

It belongs to the neurotoxin 04 (omega-agtx) family. 03 (type II/III omega-agtx) subfamily. In terms of tissue distribution, expressed by the venom gland.

It is found in the secreted. Omega-agatoxins are antagonists of voltage-gated calcium channels. This toxin blocks calcium channels in insect central neurons but not at peripheral neuromuscular junctions. In vertebrates, it is broadly active against all high-threshold Cav1/CACNA1 channels and Cav2.2/CACNA1B channels. The polypeptide is Omega-agatoxin-Aa3b (Agelenopsis aperta (North American funnel-web spider)).